A 130-amino-acid polypeptide reads, in one-letter code: Small ribosomal subunit protein uS8 (130 aa).

It belongs to the universal ribosomal protein uS8 family. In terms of assembly, part of the 30S ribosomal subunit. Contacts proteins S5 and S12.

Functionally, one of the primary rRNA binding proteins, it binds directly to 16S rRNA central domain where it helps coordinate assembly of the platform of the 30S subunit. The polypeptide is Small ribosomal subunit protein uS8 (Shewanella piezotolerans (strain WP3 / JCM 13877)).